A 549-amino-acid chain; its full sequence is Probable amidase (549 aa).

Residues K132 and S209 each act as charge relay system in the active site. Catalysis depends on S233, which acts as the Acyl-ester intermediate.

The protein belongs to the amidase family.

The catalysed reaction is a monocarboxylic acid amide + H2O = a monocarboxylate + NH4(+). The polypeptide is Probable amidase (AMD2) (Saccharomyces cerevisiae (strain ATCC 204508 / S288c) (Baker's yeast)).